A 256-amino-acid chain; its full sequence is Hydroxyacylglutathione hydrolase (256 aa).

Zn(2+) is bound by residues His57, His59, Asp61, His62, His115, Asp134, and His172.

This sequence belongs to the metallo-beta-lactamase superfamily. Glyoxalase II family. As to quaternary structure, monomer. Zn(2+) is required as a cofactor.

The enzyme catalyses an S-(2-hydroxyacyl)glutathione + H2O = a 2-hydroxy carboxylate + glutathione + H(+). It participates in secondary metabolite metabolism; methylglyoxal degradation; (R)-lactate from methylglyoxal: step 2/2. Functionally, thiolesterase that catalyzes the hydrolysis of S-D-lactoyl-glutathione to form glutathione and D-lactic acid. The chain is Hydroxyacylglutathione hydrolase from Rhizobium johnstonii (strain DSM 114642 / LMG 32736 / 3841) (Rhizobium leguminosarum bv. viciae).